Here is a 226-residue protein sequence, read N- to C-terminus: Endonuclease NucS (226 aa).

It belongs to the NucS endonuclease family.

The protein localises to the cytoplasm. Its function is as follows. Cleaves both 3' and 5' ssDNA extremities of branched DNA structures. This Mycobacterium ulcerans (strain Agy99) protein is Endonuclease NucS.